A 434-amino-acid chain; its full sequence is ATP-dependent protease ATPase subunit HslU (434 aa).

Residues Val-18, 60 to 65 (GVGKTE), Asp-247, Glu-312, and Arg-384 each bind ATP.

The protein belongs to the ClpX chaperone family. HslU subfamily. A double ring-shaped homohexamer of HslV is capped on each side by a ring-shaped HslU homohexamer. The assembly of the HslU/HslV complex is dependent on binding of ATP.

It localises to the cytoplasm. Its function is as follows. ATPase subunit of a proteasome-like degradation complex; this subunit has chaperone activity. The binding of ATP and its subsequent hydrolysis by HslU are essential for unfolding of protein substrates subsequently hydrolyzed by HslV. HslU recognizes the N-terminal part of its protein substrates and unfolds these before they are guided to HslV for hydrolysis. The protein is ATP-dependent protease ATPase subunit HslU of Rhodopseudomonas palustris (strain BisB18).